The primary structure comprises 406 residues: Proteasome-activating nucleotidase 1 (406 aa).

Residues 1 to 12 (MTDTVEDVELPY) are compositionally biased toward acidic residues. The segment at 1–20 (MTDTVEDVELPYDDSASQQD) is disordered. Residues 12 to 70 (YDDSASQQDKLEALEEQLSTLEEENEEMRDRLLDANAENNKYQQKLERLSHENKKLKQS) are a coiled coil. ATP contacts are provided by residues 192–197 (GTGKTL) and His-331. Residues 385–406 (AREKLDQDSEPAAATDVSRTFA) form a disordered region. The tract at residues 404-406 (TFA) is docks into pockets in the proteasome alpha-ring to cause gate opening.

It belongs to the AAA ATPase family. As to quaternary structure, homohexamer. The hexameric complex has a two-ring architecture resembling a top hat that caps the 20S proteasome core at one or both ends. Upon ATP-binding, the C-terminus of PAN interacts with the alpha-rings of the proteasome core by binding to the intersubunit pockets.

It localises to the cytoplasm. Functionally, ATPase which is responsible for recognizing, binding, unfolding and translocation of substrate proteins into the archaeal 20S proteasome core particle. Is essential for opening the gate of the 20S proteasome via an interaction with its C-terminus, thereby allowing substrate entry and access to the site of proteolysis. Thus, the C-termini of the proteasomal ATPase function like a 'key in a lock' to induce gate opening and therefore regulate proteolysis. Unfolding activity requires energy from ATP hydrolysis, whereas ATP binding alone promotes ATPase-20S proteasome association which triggers gate opening, and supports translocation of unfolded substrates. In Halobacterium salinarum (strain ATCC 700922 / JCM 11081 / NRC-1) (Halobacterium halobium), this protein is Proteasome-activating nucleotidase 1.